A 521-amino-acid chain; its full sequence is Bifunctional purine biosynthesis protein PurH (521 aa).

An MGS-like domain is found at 1–145 (MIKQALISVS…KNHRDVTVVV (145 aa)).

Belongs to the PurH family.

It catalyses the reaction (6R)-10-formyltetrahydrofolate + 5-amino-1-(5-phospho-beta-D-ribosyl)imidazole-4-carboxamide = 5-formamido-1-(5-phospho-D-ribosyl)imidazole-4-carboxamide + (6S)-5,6,7,8-tetrahydrofolate. The catalysed reaction is IMP + H2O = 5-formamido-1-(5-phospho-D-ribosyl)imidazole-4-carboxamide. Its pathway is purine metabolism; IMP biosynthesis via de novo pathway; 5-formamido-1-(5-phospho-D-ribosyl)imidazole-4-carboxamide from 5-amino-1-(5-phospho-D-ribosyl)imidazole-4-carboxamide (10-formyl THF route): step 1/1. It functions in the pathway purine metabolism; IMP biosynthesis via de novo pathway; IMP from 5-formamido-1-(5-phospho-D-ribosyl)imidazole-4-carboxamide: step 1/1. The sequence is that of Bifunctional purine biosynthesis protein PurH from Burkholderia orbicola (strain MC0-3).